The sequence spans 493 residues: Glutamyl-tRNA(Gln) amidotransferase subunit A (493 aa).

Catalysis depends on charge relay system residues K78 and S158. The active-site Acyl-ester intermediate is S182.

The protein belongs to the amidase family. GatA subfamily. As to quaternary structure, heterotrimer of A, B and C subunits.

It carries out the reaction L-glutamyl-tRNA(Gln) + L-glutamine + ATP + H2O = L-glutaminyl-tRNA(Gln) + L-glutamate + ADP + phosphate + H(+). Allows the formation of correctly charged Gln-tRNA(Gln) through the transamidation of misacylated Glu-tRNA(Gln) in organisms which lack glutaminyl-tRNA synthetase. The reaction takes place in the presence of glutamine and ATP through an activated gamma-phospho-Glu-tRNA(Gln). The sequence is that of Glutamyl-tRNA(Gln) amidotransferase subunit A from Rickettsia felis (strain ATCC VR-1525 / URRWXCal2) (Rickettsia azadi).